The chain runs to 126 residues: Holo-[acyl-carrier-protein] synthase (126 aa).

2 residues coordinate Mg(2+): Asp8 and Glu57.

Belongs to the P-Pant transferase superfamily. AcpS family. Requires Mg(2+) as cofactor.

It localises to the cytoplasm. The enzyme catalyses apo-[ACP] + CoA = holo-[ACP] + adenosine 3',5'-bisphosphate + H(+). Transfers the 4'-phosphopantetheine moiety from coenzyme A to a Ser of acyl-carrier-protein. This is Holo-[acyl-carrier-protein] synthase from Vibrio cholerae serotype O1 (strain ATCC 39315 / El Tor Inaba N16961).